We begin with the raw amino-acid sequence, 118 residues long: Large ribosomal subunit protein uL24 (118 aa).

It belongs to the universal ribosomal protein uL24 family. As to quaternary structure, part of the 50S ribosomal subunit.

Its function is as follows. One of two assembly initiator proteins, it binds directly to the 5'-end of the 23S rRNA, where it nucleates assembly of the 50S subunit. In terms of biological role, one of the proteins that surrounds the polypeptide exit tunnel on the outside of the subunit. This is Large ribosomal subunit protein uL24 from Prochlorococcus marinus (strain MIT 9303).